The primary structure comprises 362 residues: Dihydroorotate dehydrogenase (quinone) (362 aa).

Residues Ala62–Lys66 and Thr86 each bind FMN. Lys66 serves as a coordination point for substrate. Asn111 to Phe115 provides a ligand contact to substrate. Residues Asn139 and Asn170 each coordinate FMN. Residue Asn170 coordinates substrate. Ser173 (nucleophile) is an active-site residue. Position 175 (Asn175) interacts with substrate. Residues Lys215 and Ser243 each contribute to the FMN site. Position 244–245 (Asn244–Thr245) interacts with substrate. Residues Gly266, Gly295, and Tyr316 to Ser317 contribute to the FMN site.

This sequence belongs to the dihydroorotate dehydrogenase family. Type 2 subfamily. Monomer. Requires FMN as cofactor.

It localises to the cell membrane. The catalysed reaction is (S)-dihydroorotate + a quinone = orotate + a quinol. Its pathway is pyrimidine metabolism; UMP biosynthesis via de novo pathway; orotate from (S)-dihydroorotate (quinone route): step 1/1. Catalyzes the conversion of dihydroorotate to orotate with quinone as electron acceptor. This is Dihydroorotate dehydrogenase (quinone) from Rhizobium etli (strain ATCC 51251 / DSM 11541 / JCM 21823 / NBRC 15573 / CFN 42).